The chain runs to 353 residues: Outer membrane protein P2 (353 aa).

Residues 1 to 20 form the signal peptide; that stretch reads MKKTLAALIVGAFAASAANA.

Belongs to the Gram-negative porin family. In terms of assembly, homotrimer.

The protein resides in the cell outer membrane. Forms pores that allow passive diffusion of small molecules across the outer membrane. This chain is Outer membrane protein P2 (ompP2), found in Haemophilus influenzae.